A 474-amino-acid polypeptide reads, in one-letter code: Probable protein phosphatase 2C 37 (474 aa).

Positions 1–90 are disordered; the sequence is MVMASAGVNM…RDDDGCSSTA (90 aa). Residues 57–77 are compositionally biased toward low complexity; sequence LPASSASPSPSPTSSAASSDC. Residues 113–470 enclose the PPM-type phosphatase domain; that stretch reads AFGSVSLAGR…DNISVVVIDL (358 aa). Mn(2+) is bound by residues Asp-152, Gly-153, and Asp-387. Positions 406–434 are disordered; sequence LEDGSPTSGRRAARSGEAASSSAGAPAAA. A compositionally biased stretch (low complexity) spans 420-434; sequence SGEAASSSAGAPAAA. Asp-461 is a Mn(2+) binding site.

It belongs to the PP2C family. Requires Mg(2+) as cofactor. Mn(2+) is required as a cofactor.

The catalysed reaction is O-phospho-L-seryl-[protein] + H2O = L-seryl-[protein] + phosphate. The enzyme catalyses O-phospho-L-threonyl-[protein] + H2O = L-threonyl-[protein] + phosphate. This Oryza sativa subsp. japonica (Rice) protein is Probable protein phosphatase 2C 37.